The chain runs to 200 residues: 3-isopropylmalate dehydratase small subunit (200 aa).

This sequence belongs to the LeuD family. LeuD type 1 subfamily. In terms of assembly, heterodimer of LeuC and LeuD.

It catalyses the reaction (2R,3S)-3-isopropylmalate = (2S)-2-isopropylmalate. It functions in the pathway amino-acid biosynthesis; L-leucine biosynthesis; L-leucine from 3-methyl-2-oxobutanoate: step 2/4. Its function is as follows. Catalyzes the isomerization between 2-isopropylmalate and 3-isopropylmalate, via the formation of 2-isopropylmaleate. The chain is 3-isopropylmalate dehydratase small subunit from Campylobacter jejuni subsp. doylei (strain ATCC BAA-1458 / RM4099 / 269.97).